A 724-amino-acid chain; its full sequence is Catalase-peroxidase (724 aa).

Positions 98–226 (WHSAGTYRIA…LATVMMGLIY (129 aa)) form a cross-link, tryptophyl-tyrosyl-methioninium (Trp-Tyr) (with M-252). The active-site Proton acceptor is the His99. The segment at residues 226–252 (YVNPEGVDGNPDPLKTAQDMRVTFARM) is a cross-link (tryptophyl-tyrosyl-methioninium (Tyr-Met) (with W-98)). His267 contacts heme b.

Belongs to the peroxidase family. Peroxidase/catalase subfamily. As to quaternary structure, homodimer or homotetramer. Requires heme b as cofactor. Formation of the three residue Trp-Tyr-Met cross-link is important for the catalase, but not the peroxidase activity of the enzyme.

The catalysed reaction is H2O2 + AH2 = A + 2 H2O. It carries out the reaction 2 H2O2 = O2 + 2 H2O. Bifunctional enzyme with both catalase and broad-spectrum peroxidase activity. In Vibrio cholerae serotype O1 (strain ATCC 39541 / Classical Ogawa 395 / O395), this protein is Catalase-peroxidase.